The chain runs to 196 residues: Small ribosomal subunit protein uS4c (196 aa).

One can recognise an S4 RNA-binding domain in the interval 82 to 143; sequence MRLDNILFRL…KQKSKALIQN (62 aa).

It belongs to the universal ribosomal protein uS4 family. In terms of assembly, part of the 30S ribosomal subunit. Contacts protein S5. The interaction surface between S4 and S5 is involved in control of translational fidelity.

Its subcellular location is the plastid. It localises to the chloroplast. In terms of biological role, one of the primary rRNA binding proteins, it binds directly to 16S rRNA where it nucleates assembly of the body of the 30S subunit. Its function is as follows. With S5 and S12 plays an important role in translational accuracy. This chain is Small ribosomal subunit protein uS4c (rps4), found in Patersonia sp. (strain Lejeune 1997).